The primary structure comprises 5412 residues: Mucin-4 (5412 aa).

An N-terminal signal peptide occupies residues 1–28; the sequence is MKGARWRRVPWVSLSCLCLCLLPHVVPG. Disordered stretches follow at residues 40–87 and 142–249; these read TAAP…TTSK and TSTD…ATSS. A variable number of tandem repeats (VNTR) region spans residues 43-4241; the sequence is PVTSTGSTTA…SVSTGHATPL (4199 aa). Over residues 142–163 the composition is skewed to low complexity; that stretch reads TSTDSTLGNTEETSTAGTESST. 2 O-linked (GalNAc...) threonine glycosylation sites follow: threonine 154 and threonine 156. Residues 164–199 show a composition bias toward polar residues; it reads PVTSAVSITAGQEGQSRTTSWRTSIQDTSASSQNHW. A compositionally biased stretch (low complexity) spans 200 to 223; that stretch reads TRSTQTTRESQTSTLTHRTTSTPS. The segment covering 224–249 has biased composition (polar residues); the sequence is FSPSVHNVTGTVSQKTSPSGETATSS. A glycan (N-linked (GlcNAc...) asparagine) is linked at asparagine 230. An O-linked (GalNAc...) threonine glycan is attached at threonine 234. Asparagine 255 carries N-linked (GlcNAc...) asparagine glycosylation. Polar residues-rich tracts occupy residues 267–285, 306–328, and 358–367; these read TTST…SVPV, SPAT…HQTQ, and GFNPSGTVSQ. Disordered stretches follow at residues 267-286, 303-328, 353-383, 438-473, 488-580, 592-853, 868-963, 983-1864, 1878-2078, 2111-2220, 2232-2814, 2837-3306, 3320-3580, 3592-3644, 3656-3756, and 3769-4223; these read TTST…VPVT, EGQS…HQTQ, LSSP…PSSV, LSPS…SFSP, WPSS…ALLS, TATS…ASAS, VPGT…SGSG, SSAS…DASS, ASSV…TGHA, TALH…ASTG, SAST…TGHA, IPSS…SSVS, SAST…VSTG, SVST…VSTG, SVST…ASTG, and VSTG…GHAT. Threonine 364, threonine 369, and threonine 376 each carry an O-linked (GalNAc...) threonine glycan. Over residues 368–383 the composition is skewed to low complexity; the sequence is ETFPSGETTTSSPSSV. Composition is skewed to polar residues over residues 450–459, 488–526, and 546–557; these read AFHTQQSEGA, WPSS…TGTA, and TTYSSHSTTLPK. 2 stretches are compositionally biased toward low complexity: residues 558 to 577 and 615 to 627; these read TTGA…TGEA and STNH…TSTS. Asparagine 617 is a glycosylation site (N-linked (GlcNAc...) asparagine). 3 O-linked (GalNAc...) threonine glycosylation sites follow: threonine 620, threonine 666, and threonine 688. Residues 628-677 are compositionally biased toward polar residues; that stretch reads PQESPAVSQRGHTQAPQTTQESQTTRSVSPMTDTKTVTTPGSSFTASGHS. Positions 705–717 are enriched in low complexity; it reads TTQAPTTALQAAP. Over residues 729-746 the composition is skewed to polar residues; it reads GTSLSKTGALTLANSVVS. Threonine 747 carries an O-linked (GalNAc...) threonine glycan. Low complexity predominate over residues 756–771; it reads TSASASTSPDTAAAMT. The span at 772-789 shows a compositional bias: polar residues; the sequence is HTHQAESTEASGQTQTSE. Over residues 790 to 828 the composition is skewed to low complexity; it reads PASSGSRTTSAGTATPSSSGASGTTPSGSEGISTSGETT. Threonine 797, threonine 798, threonine 802, threonine 804, threonine 813, and threonine 814 each carry an O-linked (GalNAc...) threonine glycan. Residues 829–852 are compositionally biased toward polar residues; sequence RFSSNPSRDSHTTQSTTELLSASA. Threonine 881, threonine 886, and threonine 892 each carry an O-linked (GalNAc...) threonine glycan. Positions 885-903 are enriched in low complexity; that stretch reads PTGQSSPTSPSASPQETAA. Over residues 907–928 the composition is skewed to polar residues; that stretch reads MAQTQRTRTSRGSDTISLASQA. The segment covering 929–950 has biased composition (low complexity); that stretch reads TDTFSTVPPTPPSITSTGLTSP. 54 O-linked (GalNAc...) threonine glycosylation sites follow: threonine 931, threonine 934, threonine 938, threonine 943, threonine 945, threonine 948, threonine 952, threonine 954, threonine 1003, threonine 1007, threonine 1012, threonine 1019, threonine 1022, threonine 1023, threonine 1028, threonine 1030, threonine 1035, threonine 1039, threonine 1044, threonine 1051, threonine 1055, threonine 1060, threonine 1062, threonine 1067, threonine 1071, threonine 1076, threonine 1083, threonine 1086, threonine 1087, threonine 1092, threonine 1094, threonine 1099, threonine 1103, threonine 1108, threonine 1110, threonine 1115, threonine 1118, threonine 1119, threonine 1124, threonine 1126, threonine 1131, threonine 1135, threonine 1172, threonine 1179, threonine 1182, threonine 1183, threonine 1188, threonine 1195, threonine 1199, threonine 1204, threonine 1236, threonine 1243, threonine 1246, and threonine 1247. A compositionally biased stretch (polar residues) spans 951 to 963; that stretch reads QTETHTLSPSGSG. A compositionally biased stretch (low complexity) spans 1007 to 1024; it reads TPLPVTSPSSVSTGHTTP. Polar residues predominate over residues 1028–1054; that stretch reads TDTSSESTGHVTPLPVTSFSSASTGDS. A compositionally biased stretch (polar residues) spans 1060–1086; sequence TDTSSASTGHVTPLPVTSLSSASTGDT. Residues 1092–1118 show a composition bias toward polar residues; the sequence is TDTSSASTGHATSLPVTDTSSVSTGHT. Composition is skewed to polar residues over residues 1124–1150 and 1157–1197; these read TDTS…TGHT and DASS…STGH. 2 stretches are compositionally biased toward polar residues: residues 1204–1213 and 1221–1246; these read TDTSSASTGH and DASS…TGHT. A compositionally biased stretch (polar residues) spans 1252 to 1262; it reads TDTSSASTGQA. Residues 1263–1279 are compositionally biased toward low complexity; that stretch reads TSLLVTDTSSVSTGDTT. Threonine 1278, threonine 1279, threonine 1284, threonine 1286, threonine 1291, threonine 1295, threonine 1300, threonine 1307, threonine 1311, threonine 1316, threonine 1323, threonine 1326, threonine 1332, threonine 1339, threonine 1342, threonine 1343, and threonine 1348 each carry an O-linked (GalNAc...) threonine glycan. A compositionally biased stretch (polar residues) spans 1281 to 1325; it reads LPVTSTSSASTGHVTPLHVTSPSSASTGHATPLPVTSLSSASTGD. The segment covering 1332 to 1342 has biased composition (polar residues); the sequence is TSPSSASTGDT. Polar residues-rich tracts occupy residues 1349 to 1358 and 1365 to 1405; these read DASSVSTGHT and DASS…STGH. 12 O-linked (GalNAc...) threonine glycosylation sites follow: threonine 1380, threonine 1387, threonine 1390, threonine 1391, threonine 1396, threonine 1403, threonine 1407, threonine 1412, threonine 1444, threonine 1451, threonine 1454, and threonine 1455. 2 stretches are compositionally biased toward polar residues: residues 1412-1421 and 1429-1454; these read TDTSSASTGH and DASS…TGHT. Polar residues predominate over residues 1460–1470; that stretch reads TDTSSASTGQA. Low complexity predominate over residues 1471–1487; sequence TSLLVTDTSSVSTGDTT. O-linked (GalNAc...) threonine glycosylation is found at threonine 1486, threonine 1487, threonine 1492, threonine 1494, threonine 1499, threonine 1503, threonine 1508, threonine 1515, threonine 1519, threonine 1524, threonine 1531, threonine 1534, threonine 1540, threonine 1547, threonine 1550, threonine 1551, threonine 1556, threonine 1563, threonine 1566, threonine 1567, threonine 1572, threonine 1579, threonine 1582, threonine 1583, threonine 1588, threonine 1590, threonine 1598, threonine 1599, threonine 1604, threonine 1611, threonine 1614, threonine 1615, threonine 1620, threonine 1622, threonine 1627, and threonine 1630. The span at 1489–1533 shows a compositional bias: polar residues; that stretch reads LPVTSTSSASTGHVTPLHVTSPSSASTGHATPLPVTSLSSASTGD. Residues 1540–1550 show a composition bias toward polar residues; that stretch reads TSPSSASTGDT. Polar residues predominate over residues 1557–1582; it reads DASSVSTGHTTPLPVTSPSSASTGHT. The span at 1588 to 1614 shows a compositional bias: polar residues; sequence TDTSSASKGDTTPLPVTSPSSASTGHT. The span at 1620-1631 shows a compositional bias: low complexity; that stretch reads TDTSSASTGDTT. Residues 1633–1661 are compositionally biased toward polar residues; the sequence is LPVTNASSLSTGHATPLHVTSPSSASTGH. A glycan (N-linked (GlcNAc...) asparagine) is linked at asparagine 1637. O-linked (GalNAc...) threonine glycans are attached at residues threonine 1659, threonine 1663, threonine 1668, threonine 1670, threonine 1675, threonine 1679, threonine 1716, threonine 1723, threonine 1726, threonine 1727, threonine 1732, threonine 1764, threonine 1766, threonine 1812, threonine 1819, threonine 1822, threonine 1823, threonine 1828, threonine 1835, threonine 1838, threonine 1839, threonine 1844, threonine 1854, and threonine 1855. A compositionally biased stretch (low complexity) spans 1668 to 1679; it reads TSTSSASTGHAT. Composition is skewed to polar residues over residues 1701–1741, 1749–1773, and 1812–1822; these read DVSS…STGH, DASS…STAH, and TSPSSASTGDT. The segment covering 1828-1840 has biased composition (low complexity); the sequence is TDASSASTGDTTS. 3 stretches are compositionally biased toward polar residues: residues 1841 to 1864, 1892 to 1902, and 1909 to 1950; these read LPVT…DASS, TDTNSASTGDT, and DASS…SGHT. O-linked (GalNAc...) threonine glycans are attached at residues threonine 1931, threonine 1934, threonine 1935, threonine 1940, threonine 1950, threonine 1951, threonine 1956, threonine 1963, threonine 1995, threonine 1999, threonine 2004, threonine 2006, threonine 2015, threonine 2020, threonine 2027, threonine 2030, threonine 2031, threonine 2036, threonine 2038, threonine 2047, threonine 2052, threonine 2062, threonine 2063, threonine 2132, threonine 2137, threonine 2139, threonine 2142, threonine 2143, threonine 2148, threonine 2150, threonine 2155, threonine 2159, threonine 2164, threonine 2180, threonine 2182, threonine 2187, threonine 2191, threonine 2196, threonine 2198, threonine 2203, threonine 2207, threonine 2244, threonine 2254, and threonine 2255. Polar residues predominate over residues 1957–1981; that stretch reads DASSVPTGHATSLPVTDASSVSTGH. Over residues 2004-2030 the composition is skewed to polar residues; that stretch reads TDTSSVSTGQATPLPVTSLSSASTGDT. A compositionally biased stretch (polar residues) spans 2036 to 2077; it reads TDTSSASTGQDTPLPVTSLSSVSTGDTTPLPVTNPSSASTGH. Residues 2125 to 2146 show a composition bias toward low complexity; the sequence is DTTPLPVTSPSSTSTGDTTPLP. The span at 2148–2189 shows a compositional bias: polar residues; sequence TETSSVSTGHATSLPVTDTSSASTGHATSLPVTDTSSASTGH. Polar residues-rich tracts occupy residues 2196-2219 and 2232-2254; these read TDTS…SAST and SAST…TGDT. Residues 2261–2270 are compositionally biased toward polar residues; sequence DASSVSTGHA. Over residues 2271–2283 the composition is skewed to low complexity; that stretch reads TSLPVTSLSSVST. 26 O-linked (GalNAc...) threonine glycosylation sites follow: threonine 2283, threonine 2286, threonine 2287, threonine 2292, threonine 2299, threonine 2303, threonine 2308, threonine 2324, threonine 2331, threonine 2334, threonine 2335, threonine 2340, threonine 2347, threonine 2351, threonine 2356, threonine 2363, threonine 2366, threonine 2367, threonine 2372, threonine 2382, threonine 2383, threonine 2388, threonine 2395, threonine 2398, threonine 2399, and threonine 2406. Residues 2284–2301 are compositionally biased toward polar residues; the sequence is GDTTPLPVTSPSSASTGH. A compositionally biased stretch (polar residues) spans 2309–2349; that stretch reads DASSASTGHATPLPVTSLSSASTGDTTPLPVTSPSSASTGH. Over residues 2366 to 2399 the composition is skewed to low complexity; it reads TTPLPVTSSSSASSGHTTPLPVTDASSASTGDTT. Composition is skewed to polar residues over residues 2404–2413 and 2421–2445; these read TDTSSASTGH and GLSS…STGH. The N-linked (GlcNAc...) asparagine glycan is linked to asparagine 2437. 14 O-linked (GalNAc...) threonine glycosylation sites follow: threonine 2452, threonine 2454, threonine 2459, threonine 2462, threonine 2463, threonine 2468, threonine 2500, threonine 2507, threonine 2510, threonine 2511, threonine 2516, threonine 2518, threonine 2523, and threonine 2526. The span at 2452–2471 shows a compositional bias: low complexity; the sequence is TSTSSASTGDTTPLPGTDTS. A compositionally biased stretch (polar residues) spans 2485-2510; sequence DASSVSTGDTTRLPVTSPSSASTGHT. A compositionally biased stretch (polar residues) spans 2517–2573; the sequence is DTPSASTGDTTPLPVTNASSLSTRHATSLHVTSPSSASTGHATSLPVTDTSAASTGH. Residue asparagine 2533 is glycosylated (N-linked (GlcNAc...) asparagine). Threonine 2564, threonine 2566, threonine 2571, threonine 2575, threonine 2580, threonine 2582, threonine 2587, threonine 2590, threonine 2591, threonine 2596, threonine 2598, threonine 2619, threonine 2622, threonine 2623, threonine 2628, threonine 2660, threonine 2667, threonine 2670, threonine 2671, threonine 2676, threonine 2683, threonine 2687, threonine 2692, and threonine 2694 each carry an O-linked (GalNAc...) threonine glycan. The segment covering 2580–2591 has biased composition (low complexity); the sequence is TSTSSASTGDTT. Polar residues-rich tracts occupy residues 2597–2637 and 2645–2691; these read DTYS…STGH and DASS…SLPV. Positions 2692–2704 are enriched in low complexity; sequence TDTSSASTGDTTS. Positions 2705-2723 are enriched in polar residues; the sequence is LPVTDTSSAYTGDTTSLPV. Over residues 2724–2735 the composition is skewed to low complexity; sequence TDTSSSSTGDTT. O-linked (GalNAc...) threonine glycans are attached at residues threonine 2740, threonine 2742, threonine 2750, threonine 2751, threonine 2756, threonine 2758, threonine 2763, and threonine 2767. A compositionally biased stretch (polar residues) spans 2740-2750; sequence TETSSVSTGDT. A compositionally biased stretch (polar residues) spans 2756–2798; the sequence is TDTSSASTGHATPLPVTNTSSVSTGHATPLHVTSPSSASTGHT. Asparagine 2773 carries N-linked (GlcNAc...) asparagine glycosylation. Threonine 2779, threonine 2783, threonine 2788, threonine 2795, threonine 2798, threonine 2799, and threonine 2804 each carry an O-linked (GalNAc...) threonine glycan. 2 stretches are compositionally biased toward polar residues: residues 2805–2814 and 2837–2846; these read DASSVSTGHA and IPSSASSGHT. Threonine 2846, threonine 2847, and threonine 2852 each carry an O-linked (GalNAc...) threonine glycan. Residues 2853–2877 are compositionally biased toward polar residues; that stretch reads DASSVSTGHATSLPVTDASSVSTGH. The span at 2895–2907 shows a compositional bias: low complexity; that stretch reads TPLPLTSLSSVST. O-linked (GalNAc...) threonine glycans are attached at residues threonine 2910, threonine 2911, threonine 2916, threonine 2918, threonine 2923, threonine 2927, threonine 2932, threonine 2939, threonine 2942, threonine 2943, threonine 2948, threonine 2950, threonine 2955, threonine 2959, threonine 2966, threonine 2971, and threonine 2975. Residues 2916 to 2942 are compositionally biased toward polar residues; it reads TDTSSASTGQATPLPVTSLSSVSTGDT. The span at 2948 to 2973 shows a compositional bias: polar residues; that stretch reads TDTSSASTGHATSLPVTDTSSASTGH. Polar residues-rich tracts occupy residues 2980–2989 and 3009–3037; these read TDTSSASTGH and LPVT…STGH. Residues threonine 3023, threonine 3028, threonine 3035, and threonine 3039 are each glycosylated (O-linked (GalNAc...) threonine). Positions 3044–3069 are enriched in polar residues; the sequence is TDTSSASTGHANPLHVTSPSSASTGH. Residues threonine 3071, threonine 3076, threonine 3078, threonine 3083, threonine 3087, threonine 3092, threonine 3099, threonine 3102, threonine 3103, threonine 3108, threonine 3115, threonine 3118, threonine 3119, threonine 3124, threonine 3126, threonine 3131, threonine 3135, threonine 3140, threonine 3142, threonine 3147, threonine 3150, threonine 3151, threonine 3156, threonine 3158, threonine 3163, threonine 3167, threonine 3172, threonine 3179, threonine 3182, threonine 3183, threonine 3188, threonine 3220, threonine 3227, threonine 3230, threonine 3231, threonine 3236, threonine 3243, threonine 3247, threonine 3252, and threonine 3254 are each glycosylated (O-linked (GalNAc...) threonine). Positions 3076-3118 are enriched in polar residues; sequence TDTSSASTGHATPLPVTSLSSVSTGDTTPLPVTSPSSASTGHT. The span at 3124–3134 shows a compositional bias: polar residues; the sequence is TDTSSASTGQA. Residues 3140–3151 show a composition bias toward low complexity; the sequence is TSTSSASTGDTT. Polar residues-rich tracts occupy residues 3156–3197 and 3205–3251; these read TDTS…STGH and DASS…SLPV. Residues 3252-3264 are compositionally biased toward low complexity; that stretch reads TDTSSASTGDTTS. Residues 3265-3283 show a composition bias toward polar residues; it reads LPVTDTSSAYTGDTTSLPV. A compositionally biased stretch (low complexity) spans 3284–3295; the sequence is TDTSSSSTGDTT. 9 O-linked (GalNAc...) threonine glycosylation sites follow: threonine 3294, threonine 3332, threonine 3339, threonine 3342, threonine 3343, threonine 3348, threonine 3350, threonine 3355, and threonine 3359. Positions 3320 to 3337 are enriched in polar residues; that stretch reads SASTGHATPLHVTSPSSA. Low complexity predominate over residues 3338 to 3356; it reads STGDTTPVPVTDTSSVSTG. Polar residues-rich tracts occupy residues 3365-3374 and 3381-3405; these read GLSSASTGDT and DISS…STGD. N-linked (GlcNAc...) asparagine glycosylation occurs at asparagine 3397. O-linked (GalNAc...) threonine glycans are attached at residues threonine 3398, threonine 3403, threonine 3406, threonine 3412, threonine 3419, threonine 3423, threonine 3428, threonine 3430, threonine 3435, threonine 3439, and threonine 3444. The segment covering 3412–3421 has biased composition (polar residues); that stretch reads TSPSSASTGH. Low complexity predominate over residues 3428 to 3471; the sequence is TSTSSASTGHATPVPVTSTSSASTGHTTPLPVTDTSSASTGDTT. Residue serine 3445 is glycosylated (O-linked (GalNAc...) serine). O-linked (GalNAc...) threonine glycans are attached at residues threonine 3446, threonine 3451, threonine 3454, threonine 3455, threonine 3460, threonine 3462, threonine 3467, threonine 3470, threonine 3471, threonine 3476, threonine 3483, threonine 3486, threonine 3487, threonine 3492, threonine 3499, threonine 3502, threonine 3504, threonine 3508, threonine 3515, threonine 3519, threonine 3524, threonine 3526, threonine 3531, threonine 3535, threonine 3540, threonine 3547, threonine 3550, threonine 3551, threonine 3556, threonine 3567, threonine 3614, threonine 3615, threonine 3622, threonine 3678, threonine 3679, threonine 3686, threonine 3691, threonine 3695, threonine 3700, threonine 3710, threonine 3711, threonine 3716, threonine 3718, threonine 3723, threonine 3727, threonine 3732, threonine 3739, threonine 3743, threonine 3748, threonine 3780, threonine 3787, threonine 3790, threonine 3791, threonine 3796, threonine 3798, threonine 3803, threonine 3807, threonine 3812, threonine 3822, threonine 3823, threonine 3828, threonine 3835, threonine 3839, threonine 3844, threonine 3851, threonine 3854, threonine 3860, threonine 3867, threonine 3871, threonine 3876, threonine 3883, threonine 3886, threonine 3887, threonine 3892, threonine 3894, threonine 3899, threonine 3903, threonine 3935, threonine 3940, threonine 3942, threonine 3947, threonine 3950, threonine 3951, threonine 3956, threonine 3958, threonine 3963, threonine 3967, threonine 3972, threonine 3979, threonine 3983, threonine 3988, threonine 3990, threonine 3995, threonine 3999, threonine 4004, threonine 4006, threonine 4011, threonine 4015, and threonine 4020. The segment covering 3473 to 3486 has biased composition (polar residues); the sequence is LPVTSPSSASTGHT. Residues 3493 to 3517 show a composition bias toward polar residues; that stretch reads IPSSASTGDTSTLPVTGASSASTGH. Polar residues predominate over residues 3524 to 3550; that stretch reads TDTSSVSTGHATPLPVTSLSSVSTGDT. Positions 3557 to 3580 are enriched in polar residues; sequence DASSASTGQATPLPVTSLSSVSTG. The span at 3604-3615 shows a compositional bias: low complexity; the sequence is TDTSSASTGDTT. A compositionally biased stretch (polar residues) spans 3620–3644; that stretch reads TDTSSASTGQATPLPVTSLSSVSTG. The segment covering 3668-3679 has biased composition (low complexity); that stretch reads TDTSSASTGDTT. Polar residues predominate over residues 3684 to 3694; that stretch reads TDTSSASTGQA. Positions 3710-3728 are enriched in low complexity; the sequence is TTPLPVTSTSSVSTGHVTP. The segment covering 3730-3741 has biased composition (polar residues); it reads HVTSPSSASTGH. Low complexity predominate over residues 3780-3791; that stretch reads TDASSASTGDTT. A compositionally biased stretch (polar residues) spans 3796 to 3822; that stretch reads TDTSSASTGQATPLPVTSLSSVSTGDT. The segment covering 3860 to 3869 has biased composition (polar residues); that stretch reads TSPSSASTGH. Residues 3877-3886 are compositionally biased toward polar residues; the sequence is GLSSASTGDT. The segment covering 3892–3901 has biased composition (polar residues); it reads TDTSSASTRH. The segment covering 3940–3951 has biased composition (low complexity); sequence TSTSSASTGDTT. Residues 3956–3981 show a composition bias toward polar residues; the sequence is TDTSSVSTGHATSLPVTSRSSASTGH. The span at 3988–3997 shows a compositional bias: polar residues; sequence TDTSSVSTGH. Residues 3999 to 4011 are compositionally biased toward low complexity; the sequence is TPLPVTSTSSVST. Over residues 4018–4029 the composition is skewed to polar residues; that stretch reads PVTSPSSASTGH. O-linked (GalNAc...) serine glycosylation is found at serine 4021, serine 4023, serine 4024, and serine 4026. 3 O-linked (GalNAc...) threonine glycosylation sites follow: threonine 4027, threonine 4031, and threonine 4036. Positions 4030–4047 are enriched in low complexity; it reads ATPVPVTSTSSASTGDTT. A glycan (O-linked (GalNAc...) serine) is linked at serine 4037. O-linked (GalNAc...) threonine glycans are attached at residues threonine 4038, threonine 4043, threonine 4046, and threonine 4047. Polar residues predominate over residues 4049–4093; sequence LPVTNASSLSTGHATPLHVTSPSSASRGDTSTLPVTDASSASTGH. N-linked (GlcNAc...) asparagine glycosylation is present at asparagine 4053. O-linked (GalNAc...) threonine glycosylation is found at threonine 4078 and threonine 4084. Low complexity predominate over residues 4095-4107; the sequence is TPLPLTSLSSVST. 30 O-linked (GalNAc...) threonine glycosylation sites follow: threonine 4110, threonine 4111, threonine 4116, threonine 4118, threonine 4123, threonine 4127, threonine 4132, threonine 4139, threonine 4142, threonine 4143, threonine 4148, threonine 4158, threonine 4159, threonine 4164, threonine 4171, threonine 4175, threonine 4180, threonine 4182, threonine 4187, threonine 4190, threonine 4191, threonine 4196, threonine 4198, threonine 4203, threonine 4207, threonine 4212, threonine 4214, threonine 4219, threonine 4223, and threonine 4239. The segment covering 4116-4142 has biased composition (polar residues); the sequence is TDTSSASTGQATPLPVTSLSSVSTGDT. Polar residues predominate over residues 4149 to 4173; it reads IPSSASSGHTTSLPVTDASSVSTGH. Residues 4180–4191 show a composition bias toward low complexity; it reads TSTSSASTGDTT. Polar residues predominate over residues 4196-4205; it reads TDTSSASTGH. Polar residues predominate over residues 4212–4223; that stretch reads TDTSSASTGHAT. Low complexity predominate over residues 4242–4254; the sequence is AVSSATSASTVSS. A disordered region spans residues 4242 to 4288; the sequence is AVSSATSASTVSSDSPLKMETPGMTTPSLKTDGGRRTATSPPPTTSQ. O-linked (GalNAc...) threonine glycosylation is found at threonine 4272, threonine 4278, threonine 4280, threonine 4289, threonine 4293, and threonine 4297. The NIDO domain maps to 4397–4552; sequence PFWDDADFST…GLQFYRLHRE (156 aa). In terms of domain architecture, AMOP spans 4553–4668; the sequence is ERPNYRLECL…YLCALYQQRR (116 aa). The region spanning 4680 to 4880 is the VWFD domain; the sequence is QPAWMFGDPH…TWQINGTGLL (201 aa). Asparagine 4715, asparagine 4768, asparagine 4787, asparagine 4796, asparagine 4831, asparagine 4852, asparagine 4875, asparagine 4902, asparagine 4928, asparagine 4946, asparagine 4982, asparagine 4997, asparagine 5045, asparagine 5052, asparagine 5100, and asparagine 5119 each carry an N-linked (GlcNAc...) asparagine glycan. In terms of domain architecture, EGF-like 1 spans 5118–5157; the sequence is QNQSCPVNYCYNQGHCYISQTLGCQPMCTCPPAFTDSRCF. Cystine bridges form between cysteine 5122/cysteine 5133, cysteine 5127/cysteine 5145, and cysteine 5147/cysteine 5156. N-linked (GlcNAc...) asparagine glycans are attached at residues asparagine 5185, asparagine 5192, and asparagine 5292. An EGF-like 2 domain is found at 5321-5360; it reads VSPCSRGYCDHGGQCQHLPSGPRCSCVSFSIYTAWGEHCE. Cystine bridges form between cysteine 5324/cysteine 5335, cysteine 5329/cysteine 5344, and cysteine 5346/cysteine 5359. The chain crosses the membrane as a helical span at residues 5369–5389; sequence FFGIFFGALGGLLLLGVGTFV.

As to quaternary structure, a heterodimeric complex, composed of a mucin-4 alpha chain and a cysteine-rich transmembrane mucin-4 beta chain. Mucin-4 beta chain interacts with ERBB2 via the EGF-like domain 1. In nonpolarized cells, associates with ERBB2 and ERBB3. In terms of processing, proteolytically cleaved into 2 chains, mucin-4 alpha chain and mucin-4 beta chain. Highly O-glycosylated. Post-translationally, is predominantly N-glycosylated. Expressed in the thymus, thyroid, lung, trachea, esophagus, stomach, small intestine, colon, testis, prostate, ovary, uterus, placenta, and mammary and salivary glands. Expressed in carcinomas arising from some of these epithelia, such as lung cancers, squamous cell carcinomas of the upper aerodigestive tract, mammary carcinomas, biliary tract, colon, and cervix cancers. Minimally or not expressed in the normal pancreas or chronic pancreatitis, but is highly expressed in pancreatic tumors and pancreatic tumor cell lines.

It is found in the cell membrane. It localises to the secreted. In terms of biological role, membrane-bound mucin, a family of highly glycosylated proteins that constitute the major component of the mucus, the slimy and viscous secretion covering epithelial surfaces. These glycoproteins play important roles in the protection of the epithelium and are implicated in epithelial renewal and differentiation. Regulates cellular behavior through both anti-adhesive effects on cell-cell and cell-extracellular matrix interactions and its ability to act as an intramembrane ligand for ERBB2. Plays an important role in proliferation and differentiation of epithelial cells by inducing specific phosphorylation of ERBB2. In polarized epithelial cells, segregates ERBB2 and other ERBB receptors and prevents ERBB2 from acting as a coreceptor. The interaction with ERBB2 leads to enhanced expression of CDKN1B. The formation of a MUC4-ERBB2-ERBB3-NRG1 complex leads to down-regulation of CDKN1B, resulting in repression of apoptosis and stimulation of proliferation. Its ability to promote tumor growth may be mainly due to repression of apoptosis as opposed to proliferation. This chain is Mucin-4 (MUC4), found in Homo sapiens (Human).